The chain runs to 297 residues: Halorhodopsin (297 aa).

The interval 1 to 31 (MRSRTYHDQSVCGPYGSQRTDCDRDTDAGSD) is disordered. Residues 1–45 (MRSRTYHDQSVCGPYGSQRTDCDRDTDAGSDTDVHGAQVATQIRT) are Extracellular-facing. A helical transmembrane segment spans residues 46–71 (DTLLHSSLWVNIALAGLSILVFLYMA). Topologically, residues 72 to 77 (RTVRAN) are cytoplasmic. A helical transmembrane segment spans residues 78–101 (RARLIVGATLMIPLVSLSSYLGLV). Topologically, residues 102-125 (TGLTAGPIEMPAAHALAGEDVLSQ) are extracellular. The chain crosses the membrane as a helical span at residues 126–147 (WGRYLTWTLSTPMILLALGWLA). Over 148–150 (EVD) the chain is Cytoplasmic. The helical transmembrane segment at 151 to 174 (TADLFVVIAADIGMCLTGLAAALT) threads the bilayer. Topologically, residues 175 to 177 (TSS) are extracellular. A helical transmembrane segment spans residues 178-200 (YAFRWAFYLVSTAFFVVVLYALL). At 201–212 (AKWPTNAEAAGT) the chain is on the cytoplasmic side. A helical transmembrane segment spans residues 213-236 (GDIFGTLRWLTVILWLGYPILWAL). The Extracellular segment spans residues 237-246 (GVEGFALVDS). Residues 247–275 (VGLTSWGYSLLDIGAKYLFAALLLRWVAN) form a helical membrane-spanning segment. Lysine 262 is subject to N6-(retinylidene)lysine. The Cytoplasmic portion of the chain corresponds to 276-297 (NERTIAVGQRSGRGAIGDPVED).

This sequence belongs to the archaeal/bacterial/fungal opsin family.

The protein resides in the cell membrane. Light-driven chloride pump. This is Halorhodopsin (hop) from Haloterrigena sp. (strain arg-4).